Reading from the N-terminus, the 445-residue chain is Rab GDP dissociation inhibitor beta (445 aa).

Methionine 1 is modified (N-acetylmethionine). Lysine 57 carries the N6-succinyllysine modification. Lysine 112 bears the N6-acetyllysine mark. Serine 130 is subject to Phosphoserine. Lysine 269 carries the post-translational modification N6-acetyllysine. At serine 382 the chain carries Phosphoserine.

It belongs to the Rab GDI family. Interacts with RHOH. Interacts with the GDP-bound inactive forms of RAB3A, RAB3B, RAB3C, RAB5A, RAB5B, RAB5C, RAB8A, RAB8B, RAB10, RAB12, RAB35, and RAB43; binds RAB3D to a lesser extent. Interacts with DZIP1; this interaction negatively regulates the interaction of GDI2 with GDP-bound RAB8A.

The protein localises to the cytoplasm. It is found in the membrane. Its subcellular location is the golgi apparatus. It localises to the trans-Golgi network. GDP-dissociation inhibitor preventing the GDP to GTP exchange of most Rab proteins. By keeping these small GTPases in their inactive GDP-bound form regulates intracellular membrane trafficking. Negatively regulates protein transport to the cilium and ciliogenesis through the inhibition of RAB8A. In Canis lupus familiaris (Dog), this protein is Rab GDP dissociation inhibitor beta (GDI2).